The chain runs to 20 residues: Collagenolytic protease 36 kDa A (20 aa).

Positions Ile1–Asp20 constitute a Peptidase S1 domain. The segment at Ile1–Asp20 is disordered.

The protein belongs to the peptidase S1 family.

It catalyses the reaction Hydrolysis of proteins, with broad specificity for peptide bonds. Native collagen is cleaved about 75% of the length of the molecule from the N-terminus. Low activity on small molecule substrates of both trypsin and chymotrypsin.. Functionally, this enzyme is a serine protease capable of degrading the native triple helix of collagen. This is Collagenolytic protease 36 kDa A from Paralithodes camtschaticus (Red king crab).